The sequence spans 395 residues: Choline/ethanolamine kinase (395 aa).

Ala2 carries the N-acetylalanine modification. Residues 75-81 (SGGLSNL), Arg104, 146-152 (QYIPSRP), Gln244, and Asp264 contribute to the ATP site. 77-79 (GLS) serves as a coordination point for phosphocholine.

Belongs to the choline/ethanolamine kinase family. As to quaternary structure, homodimer, and heterodimer with CHKA.

It catalyses the reaction choline + ATP = phosphocholine + ADP + H(+). The enzyme catalyses ethanolamine + ATP = phosphoethanolamine + ADP + H(+). It participates in phospholipid metabolism; phosphatidylethanolamine biosynthesis; phosphatidylethanolamine from ethanolamine: step 1/3. Functionally, has a key role in phospholipid metabolism, and catalyzes the first step of phosphatidylethanolamine and phosphatidylcholine biosynthesis. This Homo sapiens (Human) protein is Choline/ethanolamine kinase (CHKB).